We begin with the raw amino-acid sequence, 652 residues long: Threonine--tRNA ligase (652 aa).

The TGS domain maps to 1–64 (MPDVIRITFP…HEDGELVIIT (64 aa)). A catalytic region spans residues 245–542 (DHRKLGKELE…LIEEYKGAFP (298 aa)). 3 residues coordinate Zn(2+): cysteine 338, histidine 389, and histidine 519.

Belongs to the class-II aminoacyl-tRNA synthetase family. As to quaternary structure, homodimer. It depends on Zn(2+) as a cofactor.

It localises to the cytoplasm. The catalysed reaction is tRNA(Thr) + L-threonine + ATP = L-threonyl-tRNA(Thr) + AMP + diphosphate + H(+). In terms of biological role, catalyzes the attachment of threonine to tRNA(Thr) in a two-step reaction: L-threonine is first activated by ATP to form Thr-AMP and then transferred to the acceptor end of tRNA(Thr). Also edits incorrectly charged L-seryl-tRNA(Thr). The polypeptide is Threonine--tRNA ligase (Geobacillus kaustophilus (strain HTA426)).